The chain runs to 476 residues: ATP synthase subunit beta (476 aa).

An ATP-binding site is contributed by Gly-162–Thr-169.

It belongs to the ATPase alpha/beta chains family. As to quaternary structure, F-type ATPases have 2 components, CF(1) - the catalytic core - and CF(0) - the membrane proton channel. CF(1) has five subunits: alpha(3), beta(3), gamma(1), delta(1), epsilon(1). CF(0) has three main subunits: a(1), b(2) and c(9-12). The alpha and beta chains form an alternating ring which encloses part of the gamma chain. CF(1) is attached to CF(0) by a central stalk formed by the gamma and epsilon chains, while a peripheral stalk is formed by the delta and b chains.

The protein localises to the cell membrane. It carries out the reaction ATP + H2O + 4 H(+)(in) = ADP + phosphate + 5 H(+)(out). Functionally, produces ATP from ADP in the presence of a proton gradient across the membrane. The catalytic sites are hosted primarily by the beta subunits. In Mycoplasma capricolum subsp. capricolum (strain California kid / ATCC 27343 / NCTC 10154), this protein is ATP synthase subunit beta.